We begin with the raw amino-acid sequence, 449 residues long: POU domain, class 5, transcription factor 1.1 (449 aa).

Disordered regions lie at residues 79-125 (ENNQ…SPPN) and 170-233 (YPTP…PSES). Basic and acidic residues predominate over residues 97 to 110 (SRIKVKEEVVHETD). Over residues 170 to 180 (YPTPANQSPNT) the composition is skewed to polar residues. Residues 187–199 (SSMESSRCSSTNS) are compositionally biased toward low complexity. The segment covering 224–233 (DNEEEVPSES) has biased composition (acidic residues). The region spanning 227–301 (EEVPSESEME…FLERWVVEAE (75 aa)) is the POU-specific domain. The homeobox DNA-binding region spans 321–380 (KRKRRTNIENIVKGTLESYFMKCPKPGAQEMVQIAKELNMDKDVVRVWFCNRRQKGKRQG).

It belongs to the POU transcription factor family. Class-5 subfamily. In terms of assembly, interacts with components of the transcription complex that assembles on the vent2-B gene, including vent2 (via C-terminus), smad1 and smad4. Forms a repression complex on the promoters of the gsc and mix2 genes via interactions with the nodal/activin signaling pathway transducers foxh1/fast1, gtf2ird1/wbscr11 and smad2. Forms a repression complex on the promoters of the nodal/nr1 and siamois genes with the maternal factors tcf7l1/tcf3 and vegt. In terms of tissue distribution, highly enriched within the animal half of developing embryos within ectodermal and mesodermal regions. Expressed in the neuroectoderm at the early neurula stage, with expression initially extending to the future hindbrain/midbrain boundary, but later shifting toward the posterior pole where it persists within the tip of the tail in hatching embryos. Expressed at very low levels in the adult kidney.

The protein localises to the nucleus. Functionally, transcription factor that binds to the octamer motif (5'-ATTTGCAT-3'). Activates transcription when directly bound to the octamer DNA sequence, but can form repression complexes with other proteins at the promoter site to inhibit transcription. Binds to the promoter of the vent2-B gene to activate transcription when in the presence of other BMP signaling factors also bound to the promoter. Inhibits the competence of ectodermal cells to respond to BMP during embryogenesis thereby inhibiting epidermal differentiation and promoting neural induction. Antagonizes the activity of nodal/activin signaling by forming a transcriptional repression complex on the gsc and mix2 gene promoters to inhibit their transcription, and thus maintain the undifferentiated state of embryonic cells to prevent them from differentiating prematurely. Acts maternally to inhibit vegt and beta-catenin-activated gene transcription by forming a transcriptional repression complex on the nodal/nr1 and siamois promoters to inhibit their transcription. This chain is POU domain, class 5, transcription factor 1.1 (pou5f1.1), found in Xenopus laevis (African clawed frog).